A 367-amino-acid polypeptide reads, in one-letter code: DNA replication and repair protein RecF (367 aa).

30-37 (GENAQGKT) lines the ATP pocket.

Belongs to the RecF family.

The protein resides in the cytoplasm. The RecF protein is involved in DNA metabolism; it is required for DNA replication and normal SOS inducibility. RecF binds preferentially to single-stranded, linear DNA. It also seems to bind ATP. This chain is DNA replication and repair protein RecF, found in Chlamydia abortus (strain DSM 27085 / S26/3) (Chlamydophila abortus).